We begin with the raw amino-acid sequence, 290 residues long: UPF0761 membrane protein YihY (290 aa).

The next 6 membrane-spanning stretches (helical) occupy residues 44–64 (LLSL…FPMF), 104–124 (VGAC…DSAL), 140–160 (FAVY…SLAI), 183–203 (IFPL…VPTI), 210–230 (AIVG…GFAL), and 244–264 (VLAV…IVLL).

Belongs to the UPF0761 family.

The protein resides in the cell inner membrane. The polypeptide is UPF0761 membrane protein YihY (Escherichia coli O139:H28 (strain E24377A / ETEC)).